The chain runs to 783 residues: Spindle pole body protein ppc89 (783 aa).

Phosphoserine is present on serine 157. Disordered stretches follow at residues 180 to 216 (FDSP…ETPS), 434 to 458 (KESN…MNEA), 471 to 504 (ENKS…PTSG), and 528 to 610 (LSQS…MKGN). Polar residues-rich tracts occupy residues 201-216 (RSKT…ETPS), 437-453 (NVTS…SKPL), and 474-504 (SGAN…PTSG). Residues 536 to 551 (PVKHRKRRPKSKRRIT) are compositionally biased toward basic residues. Residues 566–590 (ESDEGSEEISLDSEYSDILSDDGDF) show a composition bias toward acidic residues.

Its subcellular location is the cytoplasm. It is found in the cytoskeleton. The protein resides in the microtubule organizing center. The protein localises to the spindle pole body. Its function is as follows. Has a role in meiosis. The chain is Spindle pole body protein ppc89 (ppc89) from Schizosaccharomyces pombe (strain 972 / ATCC 24843) (Fission yeast).